A 357-amino-acid chain; its full sequence is DNA integrity scanning protein DisA (357 aa).

The DAC domain maps to 8–148 (PQELIEKIKL…NYKYVVNQVD (141 aa)). Positions 76, 94, 107, 111, and 128 each coordinate 3',3'-c-di-AMP.

It belongs to the DisA family. As to quaternary structure, homooctamer. The cofactor is Mg(2+).

The catalysed reaction is 2 ATP = 3',3'-c-di-AMP + 2 diphosphate. Its activity is regulated as follows. Inhibited by 3'-dATP. In terms of biological role, participates in a DNA-damage check-point. DisA forms globular foci that rapidly scan along the chromosomes searching for lesions. Functionally, has diadenylate cyclase activity, catalyzing the condensation of 2 ATP molecules into cyclic di-AMP (c-di-AMP). c-di-AMP likely acts as a signaling molecule that may couple DNA integrity with a cellular process. This rate-limiting step is the accessibility of the active site; mutating the possible exit tunnel (residues 128-130) increases product 2-fold despite Arg-130 being important for ATP-binding. Does not convert GTP to c-di-GMP. The polypeptide is DNA integrity scanning protein DisA (Thermotoga maritima (strain ATCC 43589 / DSM 3109 / JCM 10099 / NBRC 100826 / MSB8)).